A 757-amino-acid chain; its full sequence is MVPDTACVLLLTLAALGASGQGQSPLGSDLGPQMLRELQETNAALQDVRELLRQQVREITFLKNTVMECDACGMQQSVRTGLPSVRPLLHCAPGFCFPGVACIQTESGARCGPCPAGFTGNGSHCTDVNECNAHPCFPRVRCINTSPGFRCEACPPGYSGPTHQGVGLAFAKANKQVCTDINECETGQHNCVPNSVCINTRGSFQCGPCQPGFVGDQASGCQRRAQRFCPDGSPSECHEHADCVLERDGSRSCVCAVGWAGNGILCGRDTDLDGFPDEKLRCPERQCRKDNCVTVPNSGQEDVDRDGIGDACDPDADGDGVPNEKDNCPLVRNPDQRNTDEDKWGDACDNCRSQKNDDQKDTDQDGRGDACDDDIDGDRIRNQADNCPRVPNSDQKDSDGDGIGDACDNCPQKSNPDQADVDHDFVGDACDSDQDQDGDGHQDSRDNCPTVPNSAQEDSDHDGQGDACDDDDDNDGVPDSRDNCRLVPNPGQEDADRDGVGDVCQDDFDADKVVDKIDVCPENAEVTLTDFRAFQTVVLDPEGDAQIDPNWVVLNQGREIVQTMNSDPGLAVGYTAFNGVDFEGTFHVNTVTDDDYAGFIFGYQDSSSFYVVMWKQMEQTYWQANPFRAVAEPGIQLKAVKSSTGPGEQLRNALWHTGDTESQVRLLWKDPRNVGWKDKKSYRWFLQHRPQVGYIRVRFYEGPELVADSNVVLDTTMRGGRLGVFCFSQENIIWANLRYRCNDTIPEDYETHQLRQA.

An N-terminal signal peptide occupies residues 1–20 (MVPDTACVLLLTLAALGASG). The COMP N-terminal stretch occupies residues 22 to 86 (GQSPLGSDLG…SVRTGLPSVR (65 aa)). The region spanning 87 to 126 (PLLHCAPGFCFPGVACIQTESGARCGPCPAGFTGNGSHCT) is the EGF-like 1 domain. 21 cysteine pairs are disulfide-bonded: C91/C102, C96/C111, C114/C125, C131/C142, C136/C151, C154/C178, C184/C197, C191/C206, C209/C221, C229/C243, C237/C253, C255/C266, C282/C287, C292/C312, C328/C348, C351/C371, C387/C407, C410/C430, C448/C468, C484/C504, and C520/C741. A glycan (N-linked (GlcNAc...) asparagine) is linked at N121. Residues 127-179 (DVNECNAHPCFPRVRCINTSPGFRCEACPPGYSGPTHQGVGLAFAKANKQVCT) enclose the EGF-like 2; calcium-binding domain. An EGF-like 3; calcium-binding domain is found at 180 to 222 (DINECETGQHNCVPNSVCINTRGSFQCGPCQPGFVGDQASGCQ). The EGF-like 4 domain occupies 225–267 (AQRFCPDGSPSECHEHADCVLERDGSRSCVCAVGWAGNGILCG). TSP type-3 repeat units follow at residues 268 to 300 (RDTDLDGFPDEKLRCPERQCRKDNCVTVPNSGQ), 301 to 336 (EDVDRDGIGDACDPDADGDGVPNEKDNCPLVRNPDQ), 337 to 359 (RNTDEDKWGDACDNCRSQKNDDQ), 360 to 395 (KDTDQDGRGDACDDDIDGDRIRNQADNCPRVPNSDQ), 396 to 418 (KDSDGDGIGDACDNCPQKSNPDQ), 419 to 456 (ADVDHDFVGDACDSDQDQDGDGHQDSRDNCPTVPNSAQ), 457 to 492 (EDSDHDGQGDACDDDDDNDGVPDSRDNCRLVPNPGQ), and 493 to 528 (EDADRDGVGDVCQDDFDADKVVDKIDVCPENAEVTL). A disordered region spans residues 298–503 (SGQEDVDRDG…DADRDGVGDV (206 aa)). Composition is skewed to basic and acidic residues over residues 334 to 346 (PDQRNTDEDKWGD) and 352 to 370 (RSQKNDDQKDTDQDGRGDA). Residues 367–369 (RGD) carry the Cell attachment site motif. The span at 467-476 (ACDDDDDNDG) shows a compositional bias: acidic residues. The interval 527–757 (TLTDFRAFQT…DYETHQLRQA (231 aa)) is mediates cell survival and induction of the IAP family of survival proteins. A TSP C-terminal domain is found at 532–746 (RAFQTVVLDP…LRYRCNDTIP (215 aa)). A glycan (N-linked (GlcNAc...) asparagine) is linked at N742.

It belongs to the thrombospondin family. As to quaternary structure, pentamer; disulfide-linked. Exists in a more compact conformation in the presence of calcium and shows a more extended conformation in the absence of calcium. Interacts with ITGB3, ITGA5 and FN1. Binding to FN1 requires the presence of divalent cations (Ca(2+), Mg(2+) or Mn(2+)). The greatest amount of binding is seen in the presence of Mn(2+). Interacts with MATN1, MATN3, MATN4 and ACAN. Binds heparin, heparan sulfate and chondroitin sulfate. EDTA dimishes significantly its binding to ACAN and abolishes its binding to MATN3, MATN4 and chondroitin sulfate. Interacts with collagen I, II and IX, and interaction with these collagens is dependent on the presence of zinc ions. Interacts with ADAMTS12. Interacts with ITGA7. Requires Ca(2+) as cofactor. Proteolytically cleaved by metalloproteases ADAMTS4 and ADAMTS1 with ADAMTS4 showing more potent activity. In terms of tissue distribution, abundantly expressed in the chondrocyte extracellular matrix, and is also found in bone, tendon, ligament and synovium and blood vessels. Increased amounts are produced during late stages of osteoarthritis in the area adjacent to the main defect.

It localises to the secreted. It is found in the extracellular space. The protein localises to the extracellular matrix. Functionally, plays a role in the structural integrity of cartilage via its interaction with other extracellular matrix proteins such as the collagens and fibronectin. Can mediate the interaction of chondrocytes with the cartilage extracellular matrix through interaction with cell surface integrin receptors. Could play a role in the pathogenesis of osteoarthritis. Potent suppressor of apoptosis in both primary chondrocytes and transformed cells. Suppresses apoptosis by blocking the activation of caspase-3 and by inducing the IAP family of survival proteins (BIRC3, BIRC2, BIRC5 and XIAP). Essential for maintaining a vascular smooth muscle cells (VSMCs) contractile/differentiated phenotype under physiological and pathological stimuli. Maintains this phenotype of VSMCs by interacting with ITGA7. This Homo sapiens (Human) protein is Cartilage oligomeric matrix protein.